Reading from the N-terminus, the 767-residue chain is MENITKTFQYGGVDWLCEPWVGAGSLGIGRGENPLKFALPLLLLQISVFSIFSVSFQFLLRPFGKFAFLTQMLAGICLGPSVIGRNKQYMATFFYARSVYIIESFEAICFLFICYITTCQVDTRMIKRVGKLAFINGILLFLIPFVWGQFAAILISKRLKSGPAGIPPVEFHHVAIVQSTMFFQVVYGVLSSLKMLNTEPGRLALASMMVHDCLSWCFFMLNIAIKLNVDLPNKNRAAFLSVLQMIMILVIAYVFRPLMLWMKNRTPEGHSLKASYLSVICVLLFISCLWAEFVGLPYFFGAVVLGLATPKRPPLGTGLSDKIGCFVWSVLMPCYVIGIGLNIDLSLFSWRDVIRFELLFGVVRFAKMIAIALPSLYYKVPLWHAILVGFIVNIQGLYDVQIYKQNFNYTKISSKSFGAMVMSATVNSTIFIVIVKKLYQTMSKRNPYKRRTVQHCRVEAPLRILTCFRNREAVRPVLDLVELSRPAIGSPLSVFAVNLEELNNHSLPLLIHHTQEISPFLVPSRRDQIVKAFHNFEKTNQETVLIECFTAVAPRKTMHEDVCAIAFDQETDIVILTLDAGIELWERLLCRNLLHNCPCSVALFIDRGRLPDFRFVPLKKLTINIGAIFLGGPDDREMLAYATRLASHPSVELQVFRLVDQNGVSPLRDMVERNHDMRVINVFRKENSEKNIIFREVRIEEAVNLLDLLRKEGDDFDLMMVGIRHEENLLMLEGLSEWSDMKELGEVGDVLISKDLELSVSVLAVQQ.

11 helical membrane-spanning segments follow: residues 39–59 (LPLLLLQISVFSIFSVSFQFL), 63–83 (FGKFAFLTQMLAGICLGPSVI), 99–119 (VYIIESFEAICFLFICYITTC), 135–155 (INGILLFLIPFVWGQFAAILI), 173–193 (HVAIVQSTMFFQVVYGVLSSL), 205–225 (LASMMVHDCLSWCFFMLNIAI), 242–262 (VLQMIMILVIAYVFRPLMLWM), 280–300 (ICVLLFISCLWAEFVGLPYFF), 323–343 (IGCFVWSVLMPCYVIGIGLNI), 371–391 (IALPSLYYKVPLWHAILVGFI), and 415–435 (KSFGAMVMSATVNSTIFIVIV).

The protein belongs to the monovalent cation:proton antiporter 2 (CPA2) transporter (TC 2.A.37) family. CHX (TC 2.A.37.4) subfamily. Specifically expressed in pollen.

Its subcellular location is the membrane. Its function is as follows. May operate as a cation/H(+) antiporter. This is Cation/H(+) antiporter 27 (CHX27) from Arabidopsis thaliana (Mouse-ear cress).